The sequence spans 566 residues: Transcription factor atf1 (566 aa).

A compositionally biased stretch (polar residues) spans 1–42 (MSPSPVNTSTEPASVAAVSNGNATASSTQVPENNQSDSFAPP). Disordered stretches follow at residues 1–83 (MSPS…FVGS), 96–117 (SFGS…PSLS), 315–345 (QQQT…PQAS), and 357–479 (SQQF…KSFL). Low complexity predominate over residues 43–53 (SNNSQQNQQSS). Composition is skewed to polar residues over residues 65 to 76 (ANANPADQSDGV) and 97 to 106 (FGSTASVGQG). Residues 107–117 (NPSLNRNPSLS) show a composition bias toward low complexity. Polar residues-rich tracts occupy residues 379–412 (TLRQ…TANS) and 421–460 (TDYS…YSKG). Residues 466 to 479 (SKNETDEEKRKSFL) are compositionally biased toward basic and acidic residues. Positions 472–535 (EEKRKSFLER…VSLKTLLIAH (64 aa)) constitute a bZIP domain. The basic motif stretch occupies residues 474–503 (KRKSFLERNRQAALKCRQRKKQWLSNLQAK). A leucine-zipper region spans residues 514 to 528 (LSAQVSALREEIVSL).

Belongs to the bZIP family. As to quaternary structure, heterodimer of pcr1/mts2 and atf1/mts1. In terms of processing, phosphorylated by sty1/spc1.

It localises to the nucleus. Functionally, transcription factor required for sexual development and entry into stationary phase. Binds and activates CRE sites (cAMP-response elements, also known as M26 meiotic recombination hotspots). The polypeptide is Transcription factor atf1 (atf1) (Schizosaccharomyces pombe (strain 972 / ATCC 24843) (Fission yeast)).